Here is a 2548-residue protein sequence, read N- to C-terminus: Variant-silencing SET domain-containing protein (2548 aa).

Over residues 37-48 (IDDDDDDDNDNN) the composition is skewed to acidic residues. Disordered stretches follow at residues 37–61 (IDDD…KTNN), 336–379 (GDPK…DDDN), and 585–629 (SVDR…NTQT). Residues 336–357 (GDPKKRIERNKQEIEDHRREQD) are compositionally biased toward basic and acidic residues. Over residues 358 to 378 (GENDQEEDNYDDYDDEDDDDD) the composition is skewed to acidic residues. Residues 602–616 (NGSNNNNSSSNNNNN) are compositionally biased toward low complexity. Residues 617-629 (ITHITNDCDNTQT) are compositionally biased toward polar residues. The PHD-type 1 zinc-finger motif lies at 787 to 846 (FYLCEFCEQNIFDMNNMIKKDKAKECMYRCNISCGRTFHKACVCYIKNNDNYICFFCLYD). Residues 929 to 944 (IKRRHIYRKRRRRGPR) show a composition bias toward basic residues. Disordered stretches follow at residues 929-1054 (IKRR…CDEN), 1546-1575 (EKNT…NTLD), 1713-1732 (EQGS…NNAK), and 1772-1822 (INNA…DDHR). Over residues 986–1016 (DNNDDNNDNNDDNNDNNDDNNDNNDNNDDNN) the composition is skewed to acidic residues. Composition is skewed to low complexity over residues 1017 to 1050 (NDNN…NNNN) and 1551 to 1572 (NKLC…TKYN). Polar residues predominate over residues 1714–1732 (QGSINNAKHNEQGSINNAK). In terms of domain architecture, AWS spans 2067 to 2117 (SDDYKCLCQGECNLYTCYNSLSNIQCSKSRCNLPEKIQDRKCFNRPFRKSF). Residues 2119-2240 (KDLEIKKTEK…SGEEITYNYS (122 aa)) form the SET domain. Tyrosine 2239 lines the S-adenosyl-L-methionine pocket. The PHD-type 2 zinc finger occupies 2423–2471 (DEVCRKCKSCGNLTMCDKCFQSYHQLCGNMHSKMYKNNELVLCRFCQKY).

The protein belongs to the class V-like SAM-binding methyltransferase superfamily.

It is found in the nucleus. Its subcellular location is the chromosome. It catalyses the reaction L-lysyl(36)-[histone H3] + 3 S-adenosyl-L-methionine = N(6),N(6),N(6)-trimethyl-L-lysyl(36)-[histone H3] + 3 S-adenosyl-L-homocysteine + 3 H(+). Its function is as follows. Histone methyltransferase that specifically represses expression of the surface antigen-coding var genes by mediating trimethylation of 'Lys-36' of histone H3 (H3K36me3) on var genes. SETVS-dependent H3K36me3 is specifically involved in var genes silencing, a central step malaria pathogenesis: each parasite contains 60 distinct var genes that each code for a different PfEMP1 protein. During infection, the clonal parasite population expresses only 1 gene at a time, while the 59 other var genes are silenced. The parasite then switches to the expression of a new variant antigen as an immune-evasion mechanism to avoid the host antibody response. Represses expression of both var mRNA and antisense long non-coding RNA. This chain is Variant-silencing SET domain-containing protein (SETVS), found in Plasmodium falciparum (isolate 3D7).